We begin with the raw amino-acid sequence, 504 residues long: UDP-glycosyltransferase UGT4 (504 aa).

An N-terminal signal peptide occupies residues 1-23 (MTLLRDLLLLYINSLLFINPSIG). Residues 24–474 (ENILVFLPTK…SAVIDLYWFQ (451 aa)) lie on the Lumenal side of the membrane. Residues Asn54, Asn66, Asn69, and Asn422 are each glycosylated (N-linked (GlcNAc...) asparagine). Residues 475 to 495 (YILLDIILFYSLIVLILLCIL) traverse the membrane as a helical segment. Residues 496–504 (RIFFRMLTK) are Cytoplasmic-facing.

It belongs to the UDP-glycosyltransferase family.

The protein resides in the microsome membrane. Its function is as follows. Catalyzes the transfer of a glycosyl group from a UDP-sugar to an acceptor molecule. The protein is UDP-glycosyltransferase UGT4 of Dactylopius coccus (Cochineal).